Consider the following 203-residue polypeptide: Non-histone protein 10 (203 aa).

S2 carries the post-translational modification N-acetylserine. 2 disordered regions span residues 78 to 97 and 161 to 203; these read KSKTKRHKVKERDPNMPKRP and ISNI…VSSN. The segment at residues 94 to 158 is a DNA-binding region (HMG box); the sequence is PKRPTNAYLL…RYQMEMEIYN (65 aa).

As to quaternary structure, component of the chromatin-remodeling INO80 complex, at least composed of ARP4, ARP5, ARP8, RVB1, RVB2, TAF14, NHP10, IES1, IES3, IES4, IES6, ACT1, IES2, IES5 and INO80.

It is found in the nucleus. Its function is as follows. Probably involved in transcription regulation via its interaction with the INO80 complex, a chromatin remodeling complex. This Saccharomyces cerevisiae (strain ATCC 204508 / S288c) (Baker's yeast) protein is Non-histone protein 10 (NHP10).